The following is a 651-amino-acid chain: Probable endo-1,3(4)-beta-glucanase NFIA_089530 (651 aa).

The first 21 residues, 1-21 (MAPSSLFLSVGSLIASSLVSA), serve as a signal peptide directing secretion. The GH16 domain occupies 36 to 289 (ESWQGESFIN…WAGNVFAEST (254 aa)). N-linked (GlcNAc...) asparagine glycosylation is present at Asn-64. Glu-145 serves as the catalytic Nucleophile. Residue Glu-150 is the Proton donor of the active site. Residue Asn-200 is glycosylated (N-linked (GlcNAc...) asparagine). Over residues 364-378 (PVPAETTAVPQPAQT) the composition is skewed to low complexity. Disordered stretches follow at residues 364–422 (PVPA…ESTS) and 508–557 (SEIP…PVPA). 2 stretches are compositionally biased toward polar residues: residues 379–400 (NTVA…TTVP) and 520–535 (QAVS…TAQG). Residues 542–557 (SIASASAAPSTIPVPA) are compositionally biased toward low complexity. Asn-629 is lipidated: GPI-anchor amidated asparagine. The propeptide at 630–651 (GANRMSVGLSGLIGVMFIAALA) is removed in mature form.

This sequence belongs to the glycosyl hydrolase 16 family.

The protein localises to the cell membrane. The enzyme catalyses Endohydrolysis of (1-&gt;3)- or (1-&gt;4)-linkages in beta-D-glucans when the glucose residue whose reducing group is involved in the linkage to be hydrolyzed is itself substituted at C-3.. Functionally, mixed-linked glucanase involved in the degradation of complex natural cellulosic substrates. In Neosartorya fischeri (strain ATCC 1020 / DSM 3700 / CBS 544.65 / FGSC A1164 / JCM 1740 / NRRL 181 / WB 181) (Aspergillus fischerianus), this protein is Probable endo-1,3(4)-beta-glucanase NFIA_089530.